Consider the following 498-residue polypeptide: Tyrosine 3-monooxygenase (498 aa).

Positions 1 to 10 (MPTPSASSPQ) are enriched in polar residues. A disordered region spans residues 1 to 33 (MPTPSASSPQPKGFRRAVSEQDTKQAEAVTSPR). Residues serine 19 and serine 31 each carry the phosphoserine modification. Phosphoserine; by CaMK2 and PKA is present on serine 40. The Fe cation site is built by histidine 331, histidine 336, and glutamate 376. At serine 472 the chain carries Phosphoserine.

This sequence belongs to the biopterin-dependent aromatic amino acid hydroxylase family. In terms of assembly, homotetramer. Interacts (when phosphorylated at Ser-19) with YWHAG; one YWHAG dimer bounds to one TH tetramer and this interaction may influence the phosphorylation and dephosphorylation of other sites. Interacts with NT5DC2; the interaction results in reduced phosphorylation and decreased catalytic activity of TH. The cofactor is Fe(2+). Phosphorylated on Ser-19, Ser-31 and Ser-40 by several protein kinases with different site specificities. Phosphorylation at Ser-31 and Ser-40 leads to an increase of TH activity. Phosphorylation at Ser-40 activates the enzyme and also counteracts the feedback inhibition of TH by catecholamines. Phosphorylation of Ser-19 and Ser-31 triggers the proteasomal degradation of TH through the ubiquitin-proteasome pathway. Phosphorylation at Ser-31 facilitates transport of TH from the soma to the nerve terminals via the microtubule network. Phosphorylation at Ser-19 induces the high-affinity binding to the 14-3-3 protein YWHAG; this interaction may influence the phosphorylation and dephosphorylation of other sites. Ser-19 increases the phosphorylation at Ser-40 in a hierarchical manner, leading to increased activity. As to expression, expressed in the adrenal gland. Expressed in the retina. Expressed in the in the striatum (at protein level).

The protein resides in the cytoplasm. The protein localises to the perinuclear region. It localises to the nucleus. Its subcellular location is the cell projection. It is found in the axon. The protein resides in the cytoplasmic vesicle. The protein localises to the secretory vesicle. It localises to the synaptic vesicle. It catalyses the reaction (6R)-L-erythro-5,6,7,8-tetrahydrobiopterin + L-tyrosine + O2 = (4aS,6R)-4a-hydroxy-L-erythro-5,6,7,8-tetrahydrobiopterin + L-dopa. It functions in the pathway catecholamine biosynthesis; dopamine biosynthesis; dopamine from L-tyrosine: step 1/2. Inhibited in feedback fashion by the catecholamine neurotransmitters, especially by dopamine in competition with tetrahydrobiopterin. Phosphorylation of several Ser/Thr residues in the N-terminus regulates the catalytic activity. Ser-31 and Ser-40 are readily phosphorylated to activate the catalytic activity. A Cysteine modification induced by N-ethylmaleimide (NEM), inhibits tyrosine 3-monooxygenase activity through the modification of the Cys-177. In terms of biological role, catalyzes the conversion of L-tyrosine to L-dihydroxyphenylalanine (L-Dopa), the rate-limiting step in the biosynthesis of catecholamines, dopamine, noradrenaline, and adrenaline. Uses tetrahydrobiopterin and molecular oxygen to convert tyrosine to L-Dopa. In addition to tyrosine, is able to catalyze the hydroxylation of phenylalanine and tryptophan with lower specificity. Positively regulates the regression of retinal hyaloid vessels during postnatal development. The protein is Tyrosine 3-monooxygenase (Th) of Mus musculus (Mouse).